The primary structure comprises 226 residues: MRVSSASSTPPPPAFAAAAWAVVLLAMLRSDVALAAAASSNDDTGLSPLMPPPPLAAPVPAAVSPAPATPPAVLSPRKLLRPQGADVVGVGFVSGSGGGGGGDGVRTRRVDDGCAGADDIAIYQGRATPLPSGVPAYTVDVMNRCAGGGGGDEECAIAGIHVRCGWFSSVSLVDPRVFRRLGHDDCLLNDGRPLLAGETVSFEYTNSFPYKLSVSVATCVVDPAAP.

A signal peptide spans 1–35 (MRVSSASSTPPPPAFAAAAWAVVLLAMLRSDVALA).

As to quaternary structure, interacts with MSP1. Expressed in roots, and anthers and ovules during meiosis.

In terms of biological role, involved in cell specification during anther development. Required for the differentiation of primary parietal cells into secondary parietal cells in anthers. May serve as an extracellular ligand for the MSP1 receptor kinase to limit sporocyte number in ovules. The sequence is that of TPD1 protein homolog 1A from Oryza sativa subsp. japonica (Rice).